A 200-amino-acid chain; its full sequence is ATP synthase subunit s, mitochondrial (200 aa).

A mitochondrion-targeting transit peptide spans 1–25 (MMLFGKISQQLCGVKKLPWSCDSRY). Residues 1–61 (MMLFGKISQQ…SEWLLRCGAM (61 aa)) form an N-terminal domain region. Residue G59 participates in Mg(2+) binding. 4 LRR repeats span residues 62 to 87 (VRYHGQERWQKDYNHLPTGPLDKYKI), 88 to 116 (QAIDATDSCIMSIGFDHMEGLEHVEKIRL), 117 to 141 (CKCHYIEDDCLLRLSQLENLQKTIL), and 142 to 173 (EMEIISCGNITDKGIIALLHLRNLKYLLLSDL). Residue T93 coordinates Mg(2+).

The protein belongs to the ATP synthase subunit s family. In terms of assembly, homotetramer. Associates with ATP synthase.

Its subcellular location is the mitochondrion. It is found in the mitochondrion inner membrane. Functionally, involved in regulation of mitochondrial membrane ATP synthase. Necessary for H(+) conduction of ATP synthase. Facilitates energy-driven catalysis of ATP synthesis by blocking a proton leak through an alternative proton exit pathway. The chain is ATP synthase subunit s, mitochondrial (DMAC2L) from Pongo abelii (Sumatran orangutan).